Here is a 428-residue protein sequence, read N- to C-terminus: tRNA(Ile)-lysidine synthase (428 aa).

28–33 (SGGVDS) serves as a coordination point for ATP.

The protein belongs to the tRNA(Ile)-lysidine synthase family.

It is found in the cytoplasm. The enzyme catalyses cytidine(34) in tRNA(Ile2) + L-lysine + ATP = lysidine(34) in tRNA(Ile2) + AMP + diphosphate + H(+). Ligates lysine onto the cytidine present at position 34 of the AUA codon-specific tRNA(Ile) that contains the anticodon CAU, in an ATP-dependent manner. Cytidine is converted to lysidine, thus changing the amino acid specificity of the tRNA from methionine to isoleucine. This chain is tRNA(Ile)-lysidine synthase, found in Streptococcus pyogenes serotype M1.